The following is a 200-amino-acid chain: Holliday junction branch migration complex subunit RuvA (200 aa).

Positions 1 to 64 are domain I; that stretch reads MFTYFRGELI…EDLMQLFGFL (64 aa). Residues 65–143 form a domain II region; the sequence is EEEERQLFRL…KLRPSGGTKS (79 aa). The segment at 144–148 is flexible linker; it reads VSRLS. The segment at 148 to 200 is domain III; it reads SESSMRDDAVNALVTLGFLRSVAQKAVTESLTSLRNPQVEDLVRDALLTIRTP.

It belongs to the RuvA family. Homotetramer. Forms an RuvA(8)-RuvB(12)-Holliday junction (HJ) complex. HJ DNA is sandwiched between 2 RuvA tetramers; dsDNA enters through RuvA and exits via RuvB. An RuvB hexamer assembles on each DNA strand where it exits the tetramer. Each RuvB hexamer is contacted by two RuvA subunits (via domain III) on 2 adjacent RuvB subunits; this complex drives branch migration. In the full resolvosome a probable DNA-RuvA(4)-RuvB(12)-RuvC(2) complex forms which resolves the HJ.

The protein localises to the cytoplasm. In terms of biological role, the RuvA-RuvB-RuvC complex processes Holliday junction (HJ) DNA during genetic recombination and DNA repair, while the RuvA-RuvB complex plays an important role in the rescue of blocked DNA replication forks via replication fork reversal (RFR). RuvA specifically binds to HJ cruciform DNA, conferring on it an open structure. The RuvB hexamer acts as an ATP-dependent pump, pulling dsDNA into and through the RuvAB complex. HJ branch migration allows RuvC to scan DNA until it finds its consensus sequence, where it cleaves and resolves the cruciform DNA. This Chlorobium phaeobacteroides (strain BS1) protein is Holliday junction branch migration complex subunit RuvA.